A 286-amino-acid chain; its full sequence is Putative electron transfer flavoprotein subunit YgcQ (286 aa).

225 to 253 (VCIVVGASGAAALMAGVRNSKFVVAINHD) provides a ligand contact to FAD.

Belongs to the ETF alpha-subunit/FixB family. As to quaternary structure, ygcQ and YgcR form a heterodimer.

Functionally, may play a role in a redox process. This Escherichia coli (strain K12) protein is Putative electron transfer flavoprotein subunit YgcQ (ygcQ).